The following is an 858-amino-acid chain: Taste receptor type 1 member 3 (858 aa).

A signal peptide spans 1–20; that stretch reads MPALAIMGLSLAAFLELGMG. The Extracellular segment spans residues 21 to 572; it reads ASLCLSQQFK…RPKFLAWGEP (552 aa). Asparagine 58 carries N-linked (GlcNAc...) asparagine; when associated with variant T-60 glycosylation. 9 N-linked (GlcNAc...) asparagine glycosylation sites follow: asparagine 85, asparagine 130, asparagine 203, asparagine 264, asparagine 379, asparagine 387, asparagine 418, asparagine 439, and asparagine 482. Residues 573 to 593 traverse the membrane as a helical segment; the sequence is VVLSLLLLLCLVLGLALAALG. At 594-610 the chain is on the cytoplasmic side; sequence LSVHHWDSPLVQASGGS. A helical membrane pass occupies residues 611–631; that stretch reads QFCFGLICLGLFCLSVLLFPG. Residues 632–644 are Extracellular-facing; sequence RPSSASCLAQQPM. The helical transmembrane segment at 645-665 threads the bilayer; it reads AHLPLTGCLSTLFLQAAETFV. The Cytoplasmic segment spans residues 666–687; sequence ESELPLSWANWLCSYLRGLWAW. A helical transmembrane segment spans residues 688–708; sequence LVVLLATFVEAALCAWYLIAF. Topologically, residues 709–735 are extracellular; that stretch reads PPEVVTDWSVLPTEVLEHCHVRSWVSL. Residues 736-756 form a helical membrane-spanning segment; sequence GLVHITNAMLAFLCFLGTFLV. Residues 757–767 lie on the Cytoplasmic side of the membrane; the sequence is QSQPGRYNRAR. Residues 768 to 788 traverse the membrane as a helical segment; the sequence is GLTFAMLAYFITWVSFVPLLA. The Extracellular segment spans residues 789–796; the sequence is NVQVAYQP. The chain crosses the membrane as a helical span at residues 797–817; sequence AVQMGAILVCALGILVTFHLP. At 818–858 the chain is on the cytoplasmic side; it reads KCYVLLWLPKLNTQEFFLGRNAKKAADENSGGGEAAQGHNE.

It belongs to the G-protein coupled receptor 3 family. TAS1R subfamily. In terms of assembly, forms homodimers or heterodimers with TAS1R1 and TAS1R2. The Thr-60 variant is predicted to introduce a novel N-linked glycosylation site at Asn-58. The addition of even a short carbohydrate group at Asn-58 is predicted to disrupt one of the contact surfaces required for stability of a dimer. Therefore a Thr-60 variant N-glycosylated at Asn-58 is predicted to be precluded from forming homodimers or heterodimers. Expressed in circumvallate, foliate and fungiform taste papillae as well as in taste buds on the palate. Also expressed in testis. Not expressed in brain, heart, kidney, liver or spleen. The topographic distribution in various taste papillae is different from those of other T1R members.

It is found in the cell membrane. Putative taste receptor. TAS1R1/TAS1R3 responds to the umami taste stimulus (the taste of monosodium glutamate) and also to most of the 20 standard L-amino acids, but not to their D-enantiomers or other compounds. TAS1R2/TAS1R3 recognizes diverse natural and synthetic sweeteners. TAS1R3 is essential for the recognition and response to the disaccharide trehalose. Sequence differences within and between species can significantly influence the selectivity and specificity of taste responses. The protein is Taste receptor type 1 member 3 (Tas1r3) of Mus musculus (Mouse).